The chain runs to 240 residues: uncharacterized protein (240 aa).

Asp66 functions as the Proton acceptor in the catalytic mechanism. Residue Asp129 is part of the active site. His131 serves as the catalytic Proton acceptor.

Belongs to the glucosamine/galactosamine-6-phosphate isomerase family.

This is an uncharacterized protein from Escherichia coli (strain K12).